The chain runs to 470 residues: Neuraminidase (470 aa).

Topologically, residues 1–6 are intravirion; sequence MNPNQK. Residues 7–27 traverse the membrane as a helical segment; sequence IITIGSICMAIGIISLILQMG. The interval 11 to 33 is involved in apical transport and lipid raft association; the sequence is GSICMAIGIISLILQMGNIISIW. Over 28-470 the chain is Virion surface; it reads NIISIWVSHS…GAELPFTIDK (443 aa). The tract at residues 36 to 90 is hypervariable stalk region; the sequence is HSIQTGSQNHTGICNQRIITYENSTWVNQTYVNINNTNVVAGKDTTSVTLAGNSS. N-linked (GlcNAc...) asparagine; by host glycans are attached at residues Asn-44, Asn-58, Asn-63, Asn-70, and Asn-88. The interval 91–470 is head of neuraminidase; it reads LCPIRGWAIY…GAELPFTIDK (380 aa). 8 cysteine pairs are disulfide-bonded: Cys-92-Cys-417, Cys-124-Cys-129, Cys-184-Cys-231, Cys-233-Cys-238, Cys-279-Cys-292, Cys-281-Cys-290, Cys-318-Cys-335, and Cys-421-Cys-447. Substrate is bound at residue Arg-118. Residue Asn-146 is glycosylated (N-linked (GlcNAc...) asparagine; by host). Asp-151 serves as the catalytic Proton donor/acceptor. Arg-152 serves as a coordination point for substrate. Asn-235 carries N-linked (GlcNAc...) asparagine; by host glycosylation. 277 to 278 contacts substrate; the sequence is EE. Arg-293 provides a ligand contact to substrate. Positions 294, 298, and 324 each coordinate Ca(2+). N-linked (GlcNAc...) asparagine; by host glycosylation occurs at Asn-365. Residue Arg-368 coordinates substrate. Residue Tyr-402 is the Nucleophile of the active site. Asn-455 is a glycosylation site (N-linked (GlcNAc...) asparagine; by host).

It belongs to the glycosyl hydrolase 34 family. As to quaternary structure, homotetramer. Requires Ca(2+) as cofactor. N-glycosylated.

It is found in the virion membrane. Its subcellular location is the host apical cell membrane. It catalyses the reaction Hydrolysis of alpha-(2-&gt;3)-, alpha-(2-&gt;6)-, alpha-(2-&gt;8)- glycosidic linkages of terminal sialic acid residues in oligosaccharides, glycoproteins, glycolipids, colominic acid and synthetic substrates.. With respect to regulation, inhibited by the neuraminidase inhibitors zanamivir (Relenza) and oseltamivir (Tamiflu). These drugs interfere with the release of progeny virus from infected cells and are effective against all influenza strains. Resistance to neuraminidase inhibitors is quite rare. Its function is as follows. Catalyzes the removal of terminal sialic acid residues from viral and cellular glycoconjugates. Cleaves off the terminal sialic acids on the glycosylated HA during virus budding to facilitate virus release. Additionally helps virus spread through the circulation by further removing sialic acids from the cell surface. These cleavages prevent self-aggregation and ensure the efficient spread of the progeny virus from cell to cell. Otherwise, infection would be limited to one round of replication. Described as a receptor-destroying enzyme because it cleaves a terminal sialic acid from the cellular receptors. May facilitate viral invasion of the upper airways by cleaving the sialic acid moieties on the mucin of the airway epithelial cells. Likely to plays a role in the budding process through its association with lipid rafts during intracellular transport. May additionally display a raft-association independent effect on budding. Plays a role in the determination of host range restriction on replication and virulence. Sialidase activity in late endosome/lysosome traffic seems to enhance virus replication. The sequence is that of Neuraminidase from Aves (Human).